A 161-amino-acid chain; its full sequence is MORN repeat-containing protein 5 (161 aa).

MORN repeat units lie at residues 8–30 (YIGEYVDGRMEGKAKYILPTETI), 31–53 (YVGEMKDGMFHGEGTLYFPSGSQ), and 54–75 (YDAIWENGLAIKGTYTFSDGLH).

As to expression, expressed in sperm (at protein level).

The protein localises to the cell projection. The protein resides in the cilium. It is found in the flagellum. The protein is MORN repeat-containing protein 5 (MORN5) of Homo sapiens (Human).